A 217-amino-acid chain; its full sequence is Adenylate kinase (217 aa).

10-15 (GAGKGT) is an ATP binding site. Positions 30 to 59 (STGDMLREAVAKGTELGKKAKEYMDKGELV) are NMP. AMP is bound by residues threonine 31, arginine 36, 57–59 (ELV), 85–88 (GFPR), and glutamine 92. The segment at 126–163 (YRRTCRNCGAVYHLIYAPPKEDNKCDKCGGELYQRDDD) is LID. Arginine 127 contributes to the ATP binding site. Residues cysteine 130 and cysteine 133 each contribute to the Zn(2+) site. 136–137 (VY) contacts ATP. The Zn(2+) site is built by cysteine 150 and cysteine 153. AMP is bound by residues arginine 160 and arginine 171. Lysine 199 is an ATP binding site.

It belongs to the adenylate kinase family. In terms of assembly, monomer.

It is found in the cytoplasm. The enzyme catalyses AMP + ATP = 2 ADP. It participates in purine metabolism; AMP biosynthesis via salvage pathway; AMP from ADP: step 1/1. Its function is as follows. Catalyzes the reversible transfer of the terminal phosphate group between ATP and AMP. Plays an important role in cellular energy homeostasis and in adenine nucleotide metabolism. The chain is Adenylate kinase from Archaeoglobus fulgidus (strain ATCC 49558 / DSM 4304 / JCM 9628 / NBRC 100126 / VC-16).